The following is a 599-amino-acid chain: Leishmanolysin (599 aa).

Residues 1–39 (MSVDSSSTHRHRSVAARLVRLAAAGAAVIAAVGTAAAWA) form the signal peptide. Residues 40 to 97 (HAGAVQHRCIHDAMQARVRQSVARHHTAPGAVSAVGLPYVTLDTAAAADRRPGSAPTV) constitute a propeptide, activation peptide. 2 cysteine pairs are disulfide-bonded: Cys-122–Cys-139 and Cys-188–Cys-227. His-261 is a binding site for Zn(2+). The active site involves Glu-262. His-265 is a Zn(2+) binding site. The N-linked (GlcNAc...) asparagine glycan is linked to Asn-297. 7 disulfides stabilise this stretch: Cys-311-Cys-383, Cys-390-Cys-452, Cys-403-Cys-422, Cys-412-Cys-486, Cys-463-Cys-507, Cys-512-Cys-562, and Cys-532-Cys-555. His-331 is a binding site for Zn(2+). N-linked (GlcNAc...) asparagine glycosylation occurs at Asn-394. The GPI-anchor amidated asparagine moiety is linked to residue Asn-574. A propeptide spans 575–599 (AAAGRRGPRAAATALLVAALLAVAL) (removed in mature form).

The protein belongs to the peptidase M8 family. Requires Zn(2+) as cofactor.

It is found in the cell membrane. It catalyses the reaction Preference for hydrophobic residues at P1 and P1' and basic residues at P2' and P3'. A model nonapeptide is cleaved at -Ala-Tyr-|-Leu-Lys-Lys-.. Functionally, has an integral role during the infection of macrophages in the mammalian host. This Leishmania chagasi protein is Leishmanolysin (gp63).